We begin with the raw amino-acid sequence, 274 residues long: Large ribosomal subunit protein uL2cy (274 aa).

2 disordered regions span residues 1-20 and 224-274; these read MAIH…AVDS and NPVD…RRSK.

It belongs to the universal ribosomal protein uL2 family. As to quaternary structure, part of the 50S ribosomal subunit.

Its subcellular location is the plastid. It is found in the chloroplast. The protein is Large ribosomal subunit protein uL2cy (rpl2-B) of Populus alba (White poplar).